Reading from the N-terminus, the 201-residue chain is Large ribosomal subunit protein uL4 (201 aa).

The disordered stretch occupies residues 45–66 (AQLTRSEVSGGGKKPWRQKGTG).

Belongs to the universal ribosomal protein uL4 family. Part of the 50S ribosomal subunit.

In terms of biological role, one of the primary rRNA binding proteins, this protein initially binds near the 5'-end of the 23S rRNA. It is important during the early stages of 50S assembly. It makes multiple contacts with different domains of the 23S rRNA in the assembled 50S subunit and ribosome. Its function is as follows. Forms part of the polypeptide exit tunnel. The sequence is that of Large ribosomal subunit protein uL4 from Aeromonas hydrophila subsp. hydrophila (strain ATCC 7966 / DSM 30187 / BCRC 13018 / CCUG 14551 / JCM 1027 / KCTC 2358 / NCIMB 9240 / NCTC 8049).